Reading from the N-terminus, the 1168-residue chain is Zinc finger CCHC domain-containing protein 2 (1168 aa).

4 disordered regions span residues 1 to 87 (MLRM…GGHA), 209 to 242 (EGSRGSVEDEPGGDDEQDAEKDGPGPEGGGCAKL), 561 to 693 (KRSL…LGTE), and 932 to 978 (ATSA…SDST). Pro residues predominate over residues 43–66 (PPPPPPTGLPRGPPPPPPSPPRGL). Residues 67 to 78 (EPPVASGPTAGA) show a composition bias toward low complexity. Residues 216–227 (EDEPGGDDEQDA) are compositionally biased toward acidic residues. A compositionally biased stretch (gly residues) spans 233–242 (GPEGGGCAKL). Residues 574–588 (PQVEKEKIKKTENRL) show a composition bias toward basic and acidic residues. Low complexity predominate over residues 626–635 (SSESYSSPSS). Residues 636 to 655 (PRHDGRESLESEEEKDRDTD) show a composition bias toward basic and acidic residues. Residues 932–949 (ATSAQPASTGISPAQSTV) show a composition bias toward polar residues. The segment covering 951–965 (PAVPTHTPGPAPSPS) has biased composition (pro residues). A compositionally biased stretch (polar residues) spans 966–978 (PALTHSTAQSDST). Residues 1121–1138 (VSCYNCGVSGHYAQDCKQ) form a CCHC-type zinc finger.

This is Zinc finger CCHC domain-containing protein 2 (Zcchc2) from Rattus norvegicus (Rat).